The sequence spans 504 residues: Maturase K (504 aa).

The protein belongs to the intron maturase 2 family. MatK subfamily.

The protein localises to the plastid. Its subcellular location is the chloroplast. Functionally, usually encoded in the trnK tRNA gene intron. Probably assists in splicing its own and other chloroplast group II introns. The sequence is that of Maturase K from Thlaspi arvense (Field penny-cress).